The primary structure comprises 540 residues: Glucose-6-phosphate isomerase (540 aa).

Glu-350 acts as the Proton donor in catalysis. Residues His-381 and Lys-503 contribute to the active site.

It belongs to the GPI family.

The protein localises to the cytoplasm. The catalysed reaction is alpha-D-glucose 6-phosphate = beta-D-fructose 6-phosphate. Its pathway is carbohydrate biosynthesis; gluconeogenesis. The protein operates within carbohydrate degradation; glycolysis; D-glyceraldehyde 3-phosphate and glycerone phosphate from D-glucose: step 2/4. Catalyzes the reversible isomerization of glucose-6-phosphate to fructose-6-phosphate. This Burkholderia cenocepacia (strain ATCC BAA-245 / DSM 16553 / LMG 16656 / NCTC 13227 / J2315 / CF5610) (Burkholderia cepacia (strain J2315)) protein is Glucose-6-phosphate isomerase.